We begin with the raw amino-acid sequence, 405 residues long: Argininosuccinate synthase (405 aa).

Residues 10–18 (AYSGGLDTS) and Ala-37 contribute to the ATP site. L-citrulline-binding residues include Tyr-88 and Ser-93. An ATP-binding site is contributed by Gly-118. Positions 120, 124, and 125 each coordinate L-aspartate. Residue Asn-124 coordinates L-citrulline. L-citrulline-binding residues include Arg-128, Ser-179, Ser-188, Glu-264, and Tyr-276.

Belongs to the argininosuccinate synthase family. Type 1 subfamily. As to quaternary structure, homotetramer.

The protein resides in the cytoplasm. The enzyme catalyses L-citrulline + L-aspartate + ATP = 2-(N(omega)-L-arginino)succinate + AMP + diphosphate + H(+). It functions in the pathway amino-acid biosynthesis; L-arginine biosynthesis; L-arginine from L-ornithine and carbamoyl phosphate: step 2/3. The protein is Argininosuccinate synthase of Pseudomonas entomophila (strain L48).